The chain runs to 804 residues: DNA gyrase subunit A (804 aa).

The Topo IIA-type catalytic domain occupies 31–495 (IPDVRDGLKP…QSIEYNEEEL (465 aa)). Tyr119 acts as the O-(5'-phospho-DNA)-tyrosine intermediate in catalysis. The short motif at 522 to 528 (QKRGGKG) is the GyrA-box element.

It belongs to the type II topoisomerase GyrA/ParC subunit family. In terms of assembly, heterotetramer, composed of two GyrA and two GyrB chains. In the heterotetramer, GyrA contains the active site tyrosine that forms a transient covalent intermediate with DNA, while GyrB binds cofactors and catalyzes ATP hydrolysis.

It is found in the cytoplasm. The enzyme catalyses ATP-dependent breakage, passage and rejoining of double-stranded DNA.. In terms of biological role, a type II topoisomerase that negatively supercoils closed circular double-stranded (ds) DNA in an ATP-dependent manner to modulate DNA topology and maintain chromosomes in an underwound state. Negative supercoiling favors strand separation, and DNA replication, transcription, recombination and repair, all of which involve strand separation. Also able to catalyze the interconversion of other topological isomers of dsDNA rings, including catenanes and knotted rings. Type II topoisomerases break and join 2 DNA strands simultaneously in an ATP-dependent manner. The sequence is that of DNA gyrase subunit A from Thermotoga maritima (strain ATCC 43589 / DSM 3109 / JCM 10099 / NBRC 100826 / MSB8).